We begin with the raw amino-acid sequence, 288 residues long: Ubiquitin thioesterase otubain-like (288 aa).

Residues 76-275 (SHIRFIRGDG…PGHYDLIYKA (200 aa)) form the OTU domain. Aspartate 84 is an active-site residue. Cysteine 87 serves as the catalytic Nucleophile. Isoleucine 175 contributes to the substrate binding site. Active-site residues include histidine 244 and histidine 268.

This sequence belongs to the peptidase C65 family.

It carries out the reaction Thiol-dependent hydrolysis of ester, thioester, amide, peptide and isopeptide bonds formed by the C-terminal Gly of ubiquitin (a 76-residue protein attached to proteins as an intracellular targeting signal).. Its function is as follows. Hydrolase that can remove conjugated ubiquitin from proteins and plays an important regulatory role at the level of protein turnover by preventing degradation. Specifically cleaves 'Lys-48'-linked polyubiquitin. This is Ubiquitin thioesterase otubain-like from Caenorhabditis briggsae.